The following is a 560-amino-acid chain: Dihydroxy-acid dehydratase (560 aa).

Cys52 contacts [2Fe-2S] cluster. Residue Asp84 coordinates Mg(2+). Cys125 serves as a coordination point for [2Fe-2S] cluster. Residues Asp126 and Lys127 each coordinate Mg(2+). The residue at position 127 (Lys127) is an N6-carboxylysine. Position 197 (Cys197) interacts with [2Fe-2S] cluster. Glu448 is a Mg(2+) binding site. Ser474 (proton acceptor) is an active-site residue.

It belongs to the IlvD/Edd family. As to quaternary structure, homodimer. The cofactor is [2Fe-2S] cluster. Requires Mg(2+) as cofactor.

It catalyses the reaction (2R)-2,3-dihydroxy-3-methylbutanoate = 3-methyl-2-oxobutanoate + H2O. The catalysed reaction is (2R,3R)-2,3-dihydroxy-3-methylpentanoate = (S)-3-methyl-2-oxopentanoate + H2O. It participates in amino-acid biosynthesis; L-isoleucine biosynthesis; L-isoleucine from 2-oxobutanoate: step 3/4. Its pathway is amino-acid biosynthesis; L-valine biosynthesis; L-valine from pyruvate: step 3/4. Functions in the biosynthesis of branched-chain amino acids. Catalyzes the dehydration of (2R,3R)-2,3-dihydroxy-3-methylpentanoate (2,3-dihydroxy-3-methylvalerate) into 2-oxo-3-methylpentanoate (2-oxo-3-methylvalerate) and of (2R)-2,3-dihydroxy-3-methylbutanoate (2,3-dihydroxyisovalerate) into 2-oxo-3-methylbutanoate (2-oxoisovalerate), the penultimate precursor to L-isoleucine and L-valine, respectively. This Francisella tularensis subsp. tularensis (strain WY96-3418) protein is Dihydroxy-acid dehydratase.